The following is a 149-amino-acid chain: 3-dehydroquinate dehydratase (149 aa).

Tyrosine 23 serves as the catalytic Proton acceptor. Substrate is bound by residues asparagine 75, histidine 81, and aspartate 88. Histidine 101 serves as the catalytic Proton donor. Residues 102–103 (MS) and arginine 112 each bind substrate.

This sequence belongs to the type-II 3-dehydroquinase family. As to quaternary structure, homododecamer.

The enzyme catalyses 3-dehydroquinate = 3-dehydroshikimate + H2O. Its pathway is metabolic intermediate biosynthesis; chorismate biosynthesis; chorismate from D-erythrose 4-phosphate and phosphoenolpyruvate: step 3/7. Functionally, catalyzes a trans-dehydration via an enolate intermediate. This chain is 3-dehydroquinate dehydratase, found in Pelobacter propionicus (strain DSM 2379 / NBRC 103807 / OttBd1).